Here is a 112-residue protein sequence, read N- to C-terminus: Putative pterin-4-alpha-carbinolamine dehydratase (112 aa).

It belongs to the pterin-4-alpha-carbinolamine dehydratase family.

It carries out the reaction (4aS,6R)-4a-hydroxy-L-erythro-5,6,7,8-tetrahydrobiopterin = (6R)-L-erythro-6,7-dihydrobiopterin + H2O. This chain is Putative pterin-4-alpha-carbinolamine dehydratase, found in Shewanella sp. (strain MR-7).